We begin with the raw amino-acid sequence, 1071 residues long: ATP-dependent helicase/deoxyribonuclease subunit B (1071 aa).

It belongs to the helicase family. AddB/RexB type 2 subfamily. Heterodimer of AddA and RexB. It depends on Mg(2+) as a cofactor.

The heterodimer acts as both an ATP-dependent DNA helicase and an ATP-dependent, dual-direction single-stranded exonuclease. Recognizes the chi site generating a DNA molecule suitable for the initiation of homologous recombination. This subunit has 5' -&gt; 3' nuclease activity but not helicase activity. This Streptococcus pyogenes serotype M18 (strain MGAS8232) protein is ATP-dependent helicase/deoxyribonuclease subunit B.